The primary structure comprises 245 residues: 1-(5-phosphoribosyl)-5-[(5-phosphoribosylamino)methylideneamino] imidazole-4-carboxamide isomerase (245 aa).

Asp7 functions as the Proton acceptor in the catalytic mechanism. Asp129 functions as the Proton donor in the catalytic mechanism.

This sequence belongs to the HisA/HisF family.

The protein resides in the cytoplasm. It carries out the reaction 1-(5-phospho-beta-D-ribosyl)-5-[(5-phospho-beta-D-ribosylamino)methylideneamino]imidazole-4-carboxamide = 5-[(5-phospho-1-deoxy-D-ribulos-1-ylimino)methylamino]-1-(5-phospho-beta-D-ribosyl)imidazole-4-carboxamide. The protein operates within amino-acid biosynthesis; L-histidine biosynthesis; L-histidine from 5-phospho-alpha-D-ribose 1-diphosphate: step 4/9. This Escherichia coli O81 (strain ED1a) protein is 1-(5-phosphoribosyl)-5-[(5-phosphoribosylamino)methylideneamino] imidazole-4-carboxamide isomerase.